Consider the following 203-residue polypeptide: IQ domain-containing protein F3 (203 aa).

Residues 1–12 (MELDQDKKKETP) show a composition bias toward basic and acidic residues. The segment at 1 to 111 (MELDQDKKKE…CETQEADRSE (111 aa)) is disordered. Positions 13–82 (EETENVNEVQ…EADKAILERS (70 aa)) form a coiled coil. The segment covering 29–38 (DEETEAEAEE) has biased composition (acidic residues). The span at 39 to 51 (ADKAILERSDSVK) shows a compositional bias: basic and acidic residues. Residues 64 to 73 (DEETEAEAEE) show a composition bias toward acidic residues. Basic and acidic residues-rich tracts occupy residues 74 to 86 (ADKAILERSDSVK) and 96 to 111 (QIQEEKCETQEADRSE). The IQ domain occupies 129–158 (VMLAGVKIQAWWRGTLVRRTLLLAALNAWT).

The protein is IQ domain-containing protein F3 (Iqcf3) of Mus musculus (Mouse).